Consider the following 446-residue polypeptide: Bifunctional protein GlmU (446 aa).

A pyrophosphorylase region spans residues 1–226; sequence MLAIAILAAG…PFEIKGINDR (226 aa). UDP-N-acetyl-alpha-D-glucosamine contacts are provided by residues 7 to 10, Lys-21, Gln-73, and 78 to 79; these read LAAG and GT. Asp-103 contacts Mg(2+). Positions 140, 155, 170, and 224 each coordinate UDP-N-acetyl-alpha-D-glucosamine. Mg(2+) is bound at residue Asn-224. The tract at residues 227 to 247 is linker; that stretch reads VQLSECEHYIQEELKSLWMSK. An N-acetyltransferase region spans residues 248 to 446; that stretch reads GVSFVDPISC…SKAIIRTKAD (199 aa). UDP-N-acetyl-alpha-D-glucosamine contacts are provided by Arg-329 and Lys-347. His-359 serves as the catalytic Proton acceptor. Residues Tyr-362 and Asn-373 each contribute to the UDP-N-acetyl-alpha-D-glucosamine site. Acetyl-CoA-binding residues include Ala-376, Ala-419, and Arg-436.

It in the N-terminal section; belongs to the N-acetylglucosamine-1-phosphate uridyltransferase family. In the C-terminal section; belongs to the transferase hexapeptide repeat family. In terms of assembly, homotrimer. Mg(2+) is required as a cofactor.

It is found in the cytoplasm. It catalyses the reaction alpha-D-glucosamine 1-phosphate + acetyl-CoA = N-acetyl-alpha-D-glucosamine 1-phosphate + CoA + H(+). It carries out the reaction N-acetyl-alpha-D-glucosamine 1-phosphate + UTP + H(+) = UDP-N-acetyl-alpha-D-glucosamine + diphosphate. It functions in the pathway nucleotide-sugar biosynthesis; UDP-N-acetyl-alpha-D-glucosamine biosynthesis; N-acetyl-alpha-D-glucosamine 1-phosphate from alpha-D-glucosamine 6-phosphate (route II): step 2/2. The protein operates within nucleotide-sugar biosynthesis; UDP-N-acetyl-alpha-D-glucosamine biosynthesis; UDP-N-acetyl-alpha-D-glucosamine from N-acetyl-alpha-D-glucosamine 1-phosphate: step 1/1. Its pathway is bacterial outer membrane biogenesis; LPS lipid A biosynthesis. Functionally, catalyzes the last two sequential reactions in the de novo biosynthetic pathway for UDP-N-acetylglucosamine (UDP-GlcNAc). The C-terminal domain catalyzes the transfer of acetyl group from acetyl coenzyme A to glucosamine-1-phosphate (GlcN-1-P) to produce N-acetylglucosamine-1-phosphate (GlcNAc-1-P), which is converted into UDP-GlcNAc by the transfer of uridine 5-monophosphate (from uridine 5-triphosphate), a reaction catalyzed by the N-terminal domain. The polypeptide is Bifunctional protein GlmU (Prochlorococcus marinus (strain NATL2A)).